Here is a 62-residue protein sequence, read N- to C-terminus: Enterocin E-760 (62 aa).

The protein resides in the secreted. Bacteriocin active against the Gram-negative bacteria S.enteritidis, S.choleraesuis, S.typhimurium, S.gallinarum, E.coli O157:H7, Y.enterocolitica, C.freundii, K.pneumoniae, S.dysentriae, P.aeruginosa, P.mirabilis, M.morganii, C.jejuni and 20 other Campylobacter isolates, and the Gram-positive bacteria S.aureus, S.epidermidis and L.monocytogenes. The chain is Enterocin E-760 from Enterococcus sp.